Here is a 497-residue protein sequence, read N- to C-terminus: Glutamate--tRNA ligase (497 aa).

The 'HIGH' region motif lies at 13 to 23 (PSPTGDPHVGT). The 'KMSKS' region signature appears at 253 to 257 (KISKR). Lysine 256 contributes to the ATP binding site.

This sequence belongs to the class-I aminoacyl-tRNA synthetase family. Glutamate--tRNA ligase type 1 subfamily. As to quaternary structure, monomer.

The protein localises to the cytoplasm. The enzyme catalyses tRNA(Glu) + L-glutamate + ATP = L-glutamyl-tRNA(Glu) + AMP + diphosphate. Its function is as follows. Catalyzes the attachment of glutamate to tRNA(Glu) in a two-step reaction: glutamate is first activated by ATP to form Glu-AMP and then transferred to the acceptor end of tRNA(Glu). The sequence is that of Glutamate--tRNA ligase from Cutibacterium acnes (strain DSM 16379 / KPA171202) (Propionibacterium acnes).